The following is a 524-amino-acid chain: 2-isopropylmalate synthase (524 aa).

Residues 12 to 274 form the Pyruvate carboxyltransferase domain; it reads VIIFDTTLRD…WNNIETTMLT (263 aa). 4 residues coordinate Mn(2+): D21, H209, H211, and N245. The interval 398 to 524 is regulatory domain; sequence KLNSLTVIAG…EAVPAVAAAG (127 aa).

The protein belongs to the alpha-IPM synthase/homocitrate synthase family. LeuA type 1 subfamily. As to quaternary structure, homodimer. Mn(2+) serves as cofactor.

It is found in the cytoplasm. The enzyme catalyses 3-methyl-2-oxobutanoate + acetyl-CoA + H2O = (2S)-2-isopropylmalate + CoA + H(+). The protein operates within amino-acid biosynthesis; L-leucine biosynthesis; L-leucine from 3-methyl-2-oxobutanoate: step 1/4. In terms of biological role, catalyzes the condensation of the acetyl group of acetyl-CoA with 3-methyl-2-oxobutanoate (2-ketoisovalerate) to form 3-carboxy-3-hydroxy-4-methylpentanoate (2-isopropylmalate). This chain is 2-isopropylmalate synthase, found in Rhodopseudomonas palustris (strain HaA2).